The primary structure comprises 1548 residues: Lysine-specific demethylase 5D (1548 aa).

The 42-residue stretch at 14-55 folds into the JmjN domain; the sequence is CPVFEPSWAEFRDPLGYIAKIRPIAEKSGICKIRPPADWQPP. One can recognise an ARID domain in the interval 79-169; that stretch reads TRVKLNYLDQ…IIYPYEIFQS (91 aa). Residues K205, K229, K244, and K279 each participate in a glycyl lysine isopeptide (Lys-Gly) (interchain with G-Cter in SUMO2) cross-link. Residues 208 to 229 are disordered; the sequence is CYSRRGKRLQPEPEPTEEDIEK. 2 positions are modified to phosphoserine: S300 and S316. The PHD-type 1 zinc-finger motif lies at 325–371; that stretch reads VCRICSRGDEVDKFLLCDGCSDNYHIFCLLPPLSEVPKGVWRCPKCI. Y439 is a 2-oxoglutarate binding site. Residues 467-633 form the JmjC domain; sequence EYAACGWNLN…VGRQCIEHYR (167 aa). Fe cation is bound by residues H513 and E515. 3 residues coordinate 2-oxoglutarate: S521, N523, and K531. H601 lines the Fe cation pocket. A C5HC2 zinc finger spans residues 706–758; sequence CIKCKTTCFLSALACYDCPDSLVCLSHINDLCKCSRNRQYLRYRYTLDELPAM. A phosphoserine mark is found at S889 and S893. K1123 participates in a covalent cross-link: Glycyl lysine isopeptide (Lys-Gly) (interchain with G-Cter in SUMO2). The PHD-type 2 zinc-finger motif lies at 1182 to 1243; sequence ICICGQVCAG…DTKFLCPLCM (62 aa). S1355 carries the post-translational modification Phosphoserine. The tract at residues 1438 to 1468 is disordered; it reads KPENPGNWSEEQTPERRRQRRQKVVLSRKGE.

The protein belongs to the JARID1 histone demethylase family. Interacts withPCGF6, MSH5, ZMYND8, AR. It depends on L-ascorbate as a cofactor. Fe(2+) serves as cofactor.

The protein resides in the nucleus. The catalysed reaction is N(6),N(6),N(6)-trimethyl-L-lysyl(4)-[histone H3] + 3 2-oxoglutarate + 3 O2 = L-lysyl(4)-[histone H3] + 3 formaldehyde + 3 succinate + 3 CO2. Histone demethylase that specifically demethylates 'Lys-4' of histone H3, thereby playing a central role in histone code. Does not demethylate histone H3 'Lys-9', H3 'Lys-27', H3 'Lys-36', H3 'Lys-79' or H4 'Lys-20'. Demethylates trimethylated and dimethylated but not monomethylated H3 'Lys-4'. May play a role in spermatogenesis. Involved in transcriptional repression of diverse metastasis-associated genes; in this function seems to cooperate with ZMYND8. Suppresses prostate cancer cell invasion. Regulates androgen receptor (AR) transcriptional activity by demethylating H3K4me3 active transcription marks. The protein is Lysine-specific demethylase 5D (Kdm5d) of Mus musculus (Mouse).